Here is a 118-residue protein sequence, read N- to C-terminus: Pterin-4-alpha-carbinolamine dehydratase (118 aa).

Belongs to the pterin-4-alpha-carbinolamine dehydratase family.

The catalysed reaction is (4aS,6R)-4a-hydroxy-L-erythro-5,6,7,8-tetrahydrobiopterin = (6R)-L-erythro-6,7-dihydrobiopterin + H2O. Involved in tetrahydrobiopterin biosynthesis. Seems to both prevent the formation of 7-pterins and accelerate the formation of quinonoid-BH2. May also have a positive regulatory role in the expression of phhA. The chain is Pterin-4-alpha-carbinolamine dehydratase (phhB) from Pseudomonas syringae pv. tomato (strain ATCC BAA-871 / DC3000).